Consider the following 269-residue polypeptide: MPTVRDLQAMAGEEPITMLTAYDAVTASIVDDTGVDVILVGDSMGNAVLGHDDTLPVTLDEMASRVGAVARGADDALVVADMPFLSFGAHESESIQNCGRMLKEEGANAIKLESGPHTVELTERLTELGIPTMAHLGLTPQSVNQTGYTRQATGREEAEEILDLAREHEAAGAFALVLEHIPANLAAKVTEAVDIPTIGIGAGGDCDGQVLVFTDVVGLSESSPPFAEQFGDVRGEVADAVDEYIDAVESGEFPRESHSHTEDELDDLY.

Mg(2+) contacts are provided by Asp-42 and Asp-81. 3-methyl-2-oxobutanoate-binding positions include Asp-42–Ser-43, Asp-81, and Lys-111. Mg(2+) is bound at residue Glu-113. The active-site Proton acceptor is Glu-179. The segment at Ser-250–Tyr-269 is disordered. Positions Glu-252–Glu-262 are enriched in basic and acidic residues.

It belongs to the PanB family. As to quaternary structure, homodecamer; pentamer of dimers. The cofactor is Mg(2+).

The protein resides in the cytoplasm. It catalyses the reaction 3-methyl-2-oxobutanoate + (6R)-5,10-methylene-5,6,7,8-tetrahydrofolate + H2O = 2-dehydropantoate + (6S)-5,6,7,8-tetrahydrofolate. The protein operates within cofactor biosynthesis; coenzyme A biosynthesis. In terms of biological role, catalyzes the reversible reaction in which hydroxymethyl group from 5,10-methylenetetrahydrofolate is transferred onto alpha-ketoisovalerate to form ketopantoate. In Haloarcula marismortui (strain ATCC 43049 / DSM 3752 / JCM 8966 / VKM B-1809) (Halobacterium marismortui), this protein is 3-methyl-2-oxobutanoate hydroxymethyltransferase.